Reading from the N-terminus, the 108-residue chain is MLYPIFIFILAGLCEIGGGYLIWLWLREGQCSLVGLIGGAILMLYGVIATFQSFPSFGRVYAAYGGVFIIMSLIFAMVVDKQMPDKYDVIGAIICIVGVLVMLLPSRA.

4 consecutive transmembrane segments (helical) span residues 5 to 25 (IFIFILAGLCEIGGGYLIWLW), 31 to 51 (CSLVGLIGGAILMLYGVIATF), 60 to 80 (VYAAYGGVFIIMSLIFAMVVD), and 86 to 106 (KYDVIGAIICIVGVLVMLLPS).

The protein belongs to the UPF0060 family.

The protein resides in the cell membrane. The chain is UPF0060 membrane protein SAB2216c from Staphylococcus aureus (strain bovine RF122 / ET3-1).